The primary structure comprises 284 residues: Ubiquitin thioesterase otubain-like (284 aa).

An OTU domain is found at 77 to 274 (GEIRYIRGDG…PGHYDVIYKK (198 aa)). The active site involves D85. C88 acts as the Nucleophile in catalysis. Residue I176 coordinates substrate. Catalysis depends on residues H245 and H267.

This sequence belongs to the peptidase C65 family.

It catalyses the reaction Thiol-dependent hydrolysis of ester, thioester, amide, peptide and isopeptide bonds formed by the C-terminal Gly of ubiquitin (a 76-residue protein attached to proteins as an intracellular targeting signal).. Its function is as follows. Hydrolase that can remove conjugated ubiquitin from proteins and plays an important regulatory role at the level of protein turnover by preventing degradation. Specifically cleaves 'Lys-48'-linked polyubiquitin. The sequence is that of Ubiquitin thioesterase otubain-like (otub-1) from Caenorhabditis elegans.